Here is a 232-residue protein sequence, read N- to C-terminus: Cytidylate kinase (232 aa).

19–27 (GPAGVGKTT) serves as a coordination point for ATP.

Belongs to the cytidylate kinase family. Type 1 subfamily.

It is found in the cytoplasm. It carries out the reaction CMP + ATP = CDP + ADP. It catalyses the reaction dCMP + ATP = dCDP + ADP. The chain is Cytidylate kinase from Nitratidesulfovibrio vulgaris (strain DP4) (Desulfovibrio vulgaris).